Reading from the N-terminus, the 38-residue chain is Cytochrome b6-f complex subunit 5 (38 aa).

A helical transmembrane segment spans residues 5-25; it reads LLSGIVLGSIPITLAGSFVTA.

It belongs to the PetG family. In terms of assembly, the 4 large subunits of the cytochrome b6-f complex are cytochrome b6, subunit IV (17 kDa polypeptide, PetD), cytochrome f and the Rieske protein, while the 4 small subunits are PetG, PetL, PetM and PetN. The complex functions as a dimer.

The protein resides in the plastid. Its subcellular location is the chloroplast thylakoid membrane. Component of the cytochrome b6-f complex, which mediates electron transfer between photosystem II (PSII) and photosystem I (PSI), cyclic electron flow around PSI, and state transitions. PetG is required for either the stability or assembly of the cytochrome b6-f complex. In Huperzia lucidula (Shining clubmoss), this protein is Cytochrome b6-f complex subunit 5.